Reading from the N-terminus, the 329-residue chain is Peroxidase 51 (329 aa).

A signal peptide spans 1 to 25 (MVVMNKTNLLLLILSLFLAINLSSA). 4 cysteine pairs are disulfide-bonded: Cys-36–Cys-119, Cys-69–Cys-74, Cys-125–Cys-325, and Cys-204–Cys-236. The Proton acceptor role is filled by His-67. Residues Asp-68, Val-71, Gly-73, Asp-75, and Ser-77 each contribute to the Ca(2+) site. Pro-167 is a substrate binding site. His-197 lines the heme b pocket. Thr-198 provides a ligand contact to Ca(2+). Asn-215 carries an N-linked (GlcNAc...) asparagine glycan. Residues Asp-249, Thr-252, and Asp-257 each coordinate Ca(2+).

The protein belongs to the peroxidase family. Classical plant (class III) peroxidase subfamily. The cofactor is heme b. Requires Ca(2+) as cofactor.

It localises to the secreted. The catalysed reaction is 2 a phenolic donor + H2O2 = 2 a phenolic radical donor + 2 H2O. Removal of H(2)O(2), oxidation of toxic reductants, biosynthesis and degradation of lignin, suberization, auxin catabolism, response to environmental stresses such as wounding, pathogen attack and oxidative stress. These functions might be dependent on each isozyme/isoform in each plant tissue. The chain is Peroxidase 51 (PER51) from Arabidopsis thaliana (Mouse-ear cress).